Here is a 217-residue protein sequence, read N- to C-terminus: Redox-sensing transcriptional repressor Rex (217 aa).

A DNA-binding region (H-T-H motif) is located at residues 17 to 56 (RYLRYVEDLLNHDVLRISSSELSQRMGYTASQVRQDFNNF). 91 to 96 (GVGNLG) is a binding site for NAD(+).

It belongs to the transcriptional regulatory Rex family. As to quaternary structure, homodimer.

It localises to the cytoplasm. In terms of biological role, modulates transcription in response to changes in cellular NADH/NAD(+) redox state. The sequence is that of Redox-sensing transcriptional repressor Rex from Caldicellulosiruptor bescii (strain ATCC BAA-1888 / DSM 6725 / KCTC 15123 / Z-1320) (Anaerocellum thermophilum).